The primary structure comprises 310 residues: DnaJ-like protein MG002 (310 aa).

The J domain maps to 1-66 (MNLYDLLELP…KEKYDSMLKV (66 aa)).

The sequence is that of DnaJ-like protein MG002 from Mycoplasma genitalium (strain ATCC 33530 / DSM 19775 / NCTC 10195 / G37) (Mycoplasmoides genitalium).